The primary structure comprises 461 residues: GTPase Der (461 aa).

EngA-type G domains follow at residues 2 to 164 and 197 to 368; these read QKII…EDDV and IRVG…KNFT. Residues 8 to 15, 55 to 59, 116 to 119, 203 to 210, 250 to 254, and 314 to 317 contribute to the GTP site; these read GKPNVGKS, DSGGL, NKID, GRVNVGKS, DTAGI, and NKWD. Positions 369-453 constitute a KH-like domain; the sequence is QKIQTSKLNE…PIVLAPKKRG (85 aa).

It belongs to the TRAFAC class TrmE-Era-EngA-EngB-Septin-like GTPase superfamily. EngA (Der) GTPase family. Associates with the 50S ribosomal subunit.

GTPase that plays an essential role in the late steps of ribosome biogenesis. This chain is GTPase Der, found in Campylobacter curvus (strain 525.92).